The primary structure comprises 168 residues: Disulfide bond formation protein B (168 aa).

The Cytoplasmic segment spans residues 1-13 (MFLTYFDAMPRRV). A helical membrane pass occupies residues 14–30 (LALVSLACVALLAFGLY). At 31–48 (LQHVVGLEPCPMCIVQRY) the chain is on the periplasmic side. Cys40 and Cys43 are oxidised to a cystine. The helical transmembrane segment at 49-64 (ALVLVAVVAGITAVAK) threads the bilayer. The Cytoplasmic portion of the chain corresponds to 65–70 (SRGLLI). A helical membrane pass occupies residues 71-88 (TGSGLLVLLSGFGAFVAA). Topologically, residues 89–144 (RQSFLQWYPPEVASCGRDFYGMIETFPLKRAIPMIFKGSGDCTKIDWTFLGLSIAN) are periplasmic. An intrachain disulfide couples Cys103 to Cys130. The helical transmembrane segment at 145-163 (WSFLCFVAIALVGLVLITR) threads the bilayer. At 164–168 (LARQR) the chain is on the cytoplasmic side.

Belongs to the DsbB family.

Its subcellular location is the cell inner membrane. Functionally, required for disulfide bond formation in some periplasmic proteins. Acts by oxidizing the DsbA protein. The sequence is that of Disulfide bond formation protein B from Polaromonas sp. (strain JS666 / ATCC BAA-500).